The sequence spans 281 residues: Pantothenate synthetase (281 aa).

30–37 contributes to the ATP binding site; that stretch reads MGNLHAGH. His37 (proton donor) is an active-site residue. Residue Gln61 participates in (R)-pantoate binding. Gln61 is a binding site for beta-alanine. 149 to 152 is a binding site for ATP; the sequence is GRKD. Gln155 provides a ligand contact to (R)-pantoate. Residues Val178 and 186 to 189 each bind ATP; that span reads MSSR.

The protein belongs to the pantothenate synthetase family. In terms of assembly, homodimer.

The protein resides in the cytoplasm. It carries out the reaction (R)-pantoate + beta-alanine + ATP = (R)-pantothenate + AMP + diphosphate + H(+). Its pathway is cofactor biosynthesis; (R)-pantothenate biosynthesis; (R)-pantothenate from (R)-pantoate and beta-alanine: step 1/1. Its function is as follows. Catalyzes the condensation of pantoate with beta-alanine in an ATP-dependent reaction via a pantoyl-adenylate intermediate. The sequence is that of Pantothenate synthetase from Shewanella amazonensis (strain ATCC BAA-1098 / SB2B).